The chain runs to 186 residues: Holliday junction branch migration complex subunit RuvA (186 aa).

Residues 1-63 (MNDYINGFLY…DNHFKYYGFF (63 aa)) are domain I. The interval 64–137 (NQLVRDLFEI…QKELFNNKIS (74 aa)) is domain II. Position 137 (Ser-137) is a region of interest, flexible linker. Residues 137–186 (SEKKNKVITSLEKLGYKTKDIYKIIINVDEDLTIDELTKYVLEKLSYINN) form a domain III region.

The protein belongs to the RuvA family. In terms of assembly, homotetramer. Forms an RuvA(8)-RuvB(12)-Holliday junction (HJ) complex. HJ DNA is sandwiched between 2 RuvA tetramers; dsDNA enters through RuvA and exits via RuvB. An RuvB hexamer assembles on each DNA strand where it exits the tetramer. Each RuvB hexamer is contacted by two RuvA subunits (via domain III) on 2 adjacent RuvB subunits; this complex drives branch migration. In the full resolvosome a probable DNA-RuvA(4)-RuvB(12)-RuvC(2) complex forms which resolves the HJ.

The protein resides in the cytoplasm. In terms of biological role, the RuvA-RuvB-RuvC complex processes Holliday junction (HJ) DNA during genetic recombination and DNA repair, while the RuvA-RuvB complex plays an important role in the rescue of blocked DNA replication forks via replication fork reversal (RFR). RuvA specifically binds to HJ cruciform DNA, conferring on it an open structure. The RuvB hexamer acts as an ATP-dependent pump, pulling dsDNA into and through the RuvAB complex. HJ branch migration allows RuvC to scan DNA until it finds its consensus sequence, where it cleaves and resolves the cruciform DNA. This Mycoplasma capricolum subsp. capricolum (strain California kid / ATCC 27343 / NCTC 10154) protein is Holliday junction branch migration complex subunit RuvA.